The chain runs to 404 residues: Probable tRNA sulfurtransferase (404 aa).

One can recognise a THUMP domain in the interval 60 to 165; the sequence is QPVVEALKLV…DEAAYISYEE (106 aa). Residues 183–184, 208–209, Arg265, Gly287, and Gln296 contribute to the ATP site; these read ML and HF.

It belongs to the ThiI family.

The protein localises to the cytoplasm. The enzyme catalyses [ThiI sulfur-carrier protein]-S-sulfanyl-L-cysteine + a uridine in tRNA + 2 reduced [2Fe-2S]-[ferredoxin] + ATP + H(+) = [ThiI sulfur-carrier protein]-L-cysteine + a 4-thiouridine in tRNA + 2 oxidized [2Fe-2S]-[ferredoxin] + AMP + diphosphate. It carries out the reaction [ThiS sulfur-carrier protein]-C-terminal Gly-Gly-AMP + S-sulfanyl-L-cysteinyl-[cysteine desulfurase] + AH2 = [ThiS sulfur-carrier protein]-C-terminal-Gly-aminoethanethioate + L-cysteinyl-[cysteine desulfurase] + A + AMP + 2 H(+). It participates in cofactor biosynthesis; thiamine diphosphate biosynthesis. Functionally, catalyzes the ATP-dependent transfer of a sulfur to tRNA to produce 4-thiouridine in position 8 of tRNAs, which functions as a near-UV photosensor. Also catalyzes the transfer of sulfur to the sulfur carrier protein ThiS, forming ThiS-thiocarboxylate. This is a step in the synthesis of thiazole, in the thiamine biosynthesis pathway. The sulfur is donated as persulfide by IscS. The sequence is that of Probable tRNA sulfurtransferase from Streptococcus pyogenes serotype M6 (strain ATCC BAA-946 / MGAS10394).